The primary structure comprises 268 residues: Type III pantothenate kinase 1 (268 aa).

6–13 provides a ligand contact to ATP; that stretch reads DIGNTNIT. Substrate is bound by residues tyrosine 100 and 107–110; that span reads GTDR. The active-site Proton acceptor is aspartate 109. Aspartate 133 contacts K(+). Threonine 136 lines the ATP pocket.

It belongs to the type III pantothenate kinase family. As to quaternary structure, homodimer. NH4(+) serves as cofactor. K(+) is required as a cofactor.

The protein localises to the cytoplasm. It carries out the reaction (R)-pantothenate + ATP = (R)-4'-phosphopantothenate + ADP + H(+). It participates in cofactor biosynthesis; coenzyme A biosynthesis; CoA from (R)-pantothenate: step 1/5. Catalyzes the phosphorylation of pantothenate (Pan), the first step in CoA biosynthesis. The sequence is that of Type III pantothenate kinase 1 from Symbiobacterium thermophilum (strain DSM 24528 / JCM 14929 / IAM 14863 / T).